The chain runs to 312 residues: Ribose-phosphate pyrophosphokinase (312 aa).

ATP contacts are provided by residues 38–40 (DGE) and 97–98 (RQ). Mg(2+) is bound by residues histidine 131 and aspartate 170. Lysine 193 is an active-site residue. D-ribose 5-phosphate is bound by residues arginine 195, aspartate 219, and 223 to 227 (DTAGT).

It belongs to the ribose-phosphate pyrophosphokinase family. Class I subfamily. In terms of assembly, homohexamer. Requires Mg(2+) as cofactor.

Its subcellular location is the cytoplasm. The catalysed reaction is D-ribose 5-phosphate + ATP = 5-phospho-alpha-D-ribose 1-diphosphate + AMP + H(+). It functions in the pathway metabolic intermediate biosynthesis; 5-phospho-alpha-D-ribose 1-diphosphate biosynthesis; 5-phospho-alpha-D-ribose 1-diphosphate from D-ribose 5-phosphate (route I): step 1/1. In terms of biological role, involved in the biosynthesis of the central metabolite phospho-alpha-D-ribosyl-1-pyrophosphate (PRPP) via the transfer of pyrophosphoryl group from ATP to 1-hydroxyl of ribose-5-phosphate (Rib-5-P). In Leptospira interrogans serogroup Icterohaemorrhagiae serovar copenhageni (strain Fiocruz L1-130), this protein is Ribose-phosphate pyrophosphokinase.